A 321-amino-acid chain; its full sequence is PI-PLC X domain-containing protein 3 (321 aa).

Residues 22 to 197 form the PI-PLC X-box domain; the sequence is SMHSIPLTNL…DYQVLVFYHS (176 aa). Catalysis depends on residues H37 and H114.

In terms of tissue distribution, expressed at highest levels in heart. Also detected in kidney, lung, small intestine and colon. Expressed at very low levels, if any, in leukocytes, thymus and skeletal muscle.

It localises to the cytoplasm. This chain is PI-PLC X domain-containing protein 3 (PLCXD3), found in Homo sapiens (Human).